The following is a 428-amino-acid chain: Kynureninase (428 aa).

Residues threonine 104, threonine 105, 132–135 (FPSD), aspartate 213, histidine 216, and tyrosine 238 contribute to the pyridoxal 5'-phosphate site. Residue lysine 239 is modified to N6-(pyridoxal phosphate)lysine. Pyridoxal 5'-phosphate-binding residues include tryptophan 267 and threonine 295.

This sequence belongs to the kynureninase family. As to quaternary structure, homodimer. It depends on pyridoxal 5'-phosphate as a cofactor.

It carries out the reaction L-kynurenine + H2O = anthranilate + L-alanine + H(+). The catalysed reaction is 3-hydroxy-L-kynurenine + H2O = 3-hydroxyanthranilate + L-alanine + H(+). It participates in amino-acid degradation; L-kynurenine degradation; L-alanine and anthranilate from L-kynurenine: step 1/1. The protein operates within cofactor biosynthesis; NAD(+) biosynthesis; quinolinate from L-kynurenine: step 2/3. Catalyzes the cleavage of L-kynurenine (L-Kyn) and L-3-hydroxykynurenine (L-3OHKyn) into anthranilic acid (AA) and 3-hydroxyanthranilic acid (3-OHAA), respectively. The polypeptide is Kynureninase (Geobacillus thermodenitrificans (strain NG80-2)).